We begin with the raw amino-acid sequence, 2293 residues long: MKGHQFKSWIFELREIVREIKNSHYFLDSWTQFNSVGSFIHIFFHQERFRKLLDPRIFSILLLRNSQGSTSNRYFTIKGVGLFVVAALLYRINNRNMVESKNLYLKGLLPIPMNSIGPRNDTSEESFGSSNINRLIVSLLYLTKGKKISESCFRDPKESTWVLPITQKCIMPESNWSSRWWRNWIGKKRDFCCKISNETVAGIDISFKDKEKDIKYLEFLFVYYMDDPIRKGHDWELFDRLSPSKRRNIINLNSGQLFEILVKDWICYLMFAFREKIPIEVEGFFKQQGAGSTIQSNDIEHVSHLFSRNKWAISLQNCAQFHMWQFHQDLFVSWGKNPHESDFLRKISRENWIWLDNVWLVNKDRFFSKVRNVSSNIQYDSTRSSFVQVTDSSQLNGSSDQFIDPFDSISNEDSEYHYHTLFNQREIQQLKERSILLDPSFIQTEGREIESDRFPKYLSGYSSMPRLFTEREKRMNNHLLPEESEEFLGNPTRAIRSFFSDRWSELHLGSNPTERSTRDQKLLKKEQDVSFVPSRRSENKEIVNIFKIITYLQNTVSIHPISSDLGCDMVPQDELDMDSSNKISFLNKNPFFDLFHLFHERKRGGYELRHESEERFQEMADLFTLSITEPDLVYHKGFAFSIDSYGLDQRQFLKEVFNSRDESKKKSLLVLPPIFYEENESFYRRIRKNWVRISCGNYLEDPKRVVFASNNIMEAVNQYRLIRNLIQIQFQYSPYGYIRNVLNRFFLMKRPDRNFEYGIQRDLIGNDTLNHSTIMKDTINQHLSNLKKSQKKWFDPLIFLSQTERSINRDPNAYRYKWSNGSKNFQEHLEHFVSERKSRFQVVFDQLCINQYSIDWSEVIDKKDLSKSLRFFLSKLLRFFLSKLLLFLSKLLLFLSNSLPFFFVSFENIPIHRSEIHIYELKGPNDQLCNQLLESIGLQIVHLKKLKPFLLDDHNTSQKSKFLINGGTISPFLFNKIPKWMIDSFHTRKNRRKSFDNTDSYFSIVSHDQDNWLNPVKPFQRSSLISSFSKANRLRFLNNPHHFCFYCNKRFPFYVEKTRLKNSDFTYGQFLTILFIHNKIFSSCGGKKKHAFLERDTISPSSIESQVSNIFISNDFPQSGDERYNLYKSFHFPIRSDPLVRRAIYSIADISGTPLIEGQRVNFERTYCQTLSDMNLSDSEEKSLHQYLNFNSNMGLIHTPCSEKYLQRKKRSLCLKKCVDKGQMDRTFQRDSAFSTLSKWNLFQTYMPWFFTSTGYKYLNLIFLDTFSDLLRILSSSQKFVSIFHDIMHGLDISWRILQKKLCLPQRNLISEISSKSLHNLLLSEEMIHRNNESSLISTHLRSPNVREVLYSILFLLLVAGYIVRTHLLFVSRAYSELQTEFEKIKSLMIPSYMIELRKLLDRYPTSELNSFWLKNLFLVALEQLGDCLEEIRGSGGNMLWGGDPAYGVKSIRSKKKDLKINFIDIIDLISIIPNPINRITFSRNTRHLSHTSKKIYSVIRKRKNVSGDWIDDKIESWVANSDSIDDKEREFLVQFSTLRAEKRIDQILLSLTHSDHLSKNDSGYQMIEQPGTIYLRYLVDIHKKYLMNYEFNTSCLAERRIFLAHYQTITYSQTSCGANSFHFPSHGKPFSLRLALSPSRSILVIGSIGTGRSYLVKYLATNSYVPFITVFLNKFLDNKPKGFFIDDIDIDDSDDIDASNDIHRELDTELELLTMMNALTMDMMSEIDRFYITLQFELAKAMSPCIIWIPNIHDLDVNESSYLALGLLVNSLSRDCERCSTRNILVIASTHIPQKVDPALIAPNKLNTCIKIRRLLIPQQRKHFFTLSYTRGFHLEKKMFHTNGFESITMGSSARDLVALTNEALSISITQKKSIIDTNTIRSALHRQTWDLRSQVRSVQDHGILFYQIGRAVAQNVLISNCPIDPISIYMKKKSCNEGDSYLYKWYFELGTSMKKFTILLYLLSCSAGSVAQDLWSLPGPDEKNRITSYGFIENDSDLVHGLLEVQGALVGSSRTEKDCSQFDNDRVTLLFRSEPRDPLYMMQDGSCSIVDQRFLYEKYESGFEEGEGEGVLDPQQIEEDLFNHIVWAPRIWRPRGFLFDCIERPNELGFPYLAGSFRGKRIIYDEKYELQENDSEFLQSGTMQYQRRDRSSKEQGFFRISQFIWDPADPLFLLFKDQPFVSVFSHREFFADEEMSKGLLTSQTDPPTSIYKRWFIKNTQEKHFELLIQRQRWLRTNSSLSNGFFRSNTRSESYQYLSNLFLSNGTLLDRMTKTLLKKRWLFSDEMKIGFM.

Position 1647 to 1654 (1647 to 1654 (GSIGTGRS)) interacts with ATP.

The protein belongs to the Ycf2 family.

It localises to the plastid. It is found in the chloroplast stroma. Probable ATPase of unknown function. Its presence in a non-photosynthetic plant (Epifagus virginiana) and experiments in tobacco indicate that it has an essential function which is probably not related to photosynthesis. This chain is Protein Ycf2 B, found in Crucihimalaya wallichii (Rock-cress).